Consider the following 435-residue polypeptide: Enolase (435 aa).

Q163 is a (2R)-2-phosphoglycerate binding site. E205 functions as the Proton donor in the catalytic mechanism. Residues D243, E292, and D319 each contribute to the Mg(2+) site. The (2R)-2-phosphoglycerate site is built by K344, R373, S374, and K395. K344 functions as the Proton acceptor in the catalytic mechanism.

Belongs to the enolase family. The cofactor is Mg(2+).

The protein resides in the cytoplasm. It localises to the secreted. The protein localises to the cell surface. The catalysed reaction is (2R)-2-phosphoglycerate = phosphoenolpyruvate + H2O. It functions in the pathway carbohydrate degradation; glycolysis; pyruvate from D-glyceraldehyde 3-phosphate: step 4/5. Catalyzes the reversible conversion of 2-phosphoglycerate (2-PG) into phosphoenolpyruvate (PEP). It is essential for the degradation of carbohydrates via glycolysis. This Streptococcus uberis (strain ATCC BAA-854 / 0140J) protein is Enolase.